Here is a 299-residue protein sequence, read N- to C-terminus: Regucalcin (299 aa).

E18 serves as a coordination point for a divalent metal cation. Residues R101, N103, and E121 each coordinate substrate. An N6-succinyllysine modification is found at K144. The a divalent metal cation site is built by N154 and D204. D204 functions as the Proton donor/acceptor in the catalytic mechanism. K244 and K253 each carry N6-succinyllysine.

It belongs to the SMP-30/CGR1 family. As to quaternary structure, monomer. It depends on Zn(2+) as a cofactor. Mn(2+) serves as cofactor. The cofactor is Ca(2+). Requires Mg(2+) as cofactor.

The protein resides in the cytoplasm. The catalysed reaction is D-glucono-1,5-lactone + H2O = D-gluconate + H(+). It participates in cofactor biosynthesis; L-ascorbate biosynthesis via UDP-alpha-D-glucuronate pathway; L-ascorbate from UDP-alpha-D-glucuronate: step 3/4. Functionally, gluconolactonase with low activity towards other sugar lactones, including gulonolactone and galactonolactone. Catalyzes a key step in ascorbic acid (vitamin C) biosynthesis. Can also hydrolyze diisopropyl phosphorofluoridate and phenylacetate (in vitro). Calcium-binding protein. Modulates Ca(2+) signaling, and Ca(2+)-dependent cellular processes and enzyme activities. This is Regucalcin (RGN) from Oryctolagus cuniculus (Rabbit).